The primary structure comprises 239 residues: Protein Thf1 (239 aa).

A coiled-coil region spans residues 183–219; the sequence is ERVKKDLELYRSNLDRLKQARAIVEEMVKAARRQQER. Residues 211 to 221 show a composition bias toward basic and acidic residues; it reads KAARRQQERRQ. Residues 211-239 form a disordered region; sequence KAARRQQERRQSTASLPETPAADRRESSG.

Belongs to the THF1 family.

In terms of biological role, may be involved in photosynthetic membrane biogenesis. This is Protein Thf1 from Synechococcus sp. (strain JA-3-3Ab) (Cyanobacteria bacterium Yellowstone A-Prime).